The following is a 484-amino-acid chain: Zinc metalloproteinase-disintegrin stejnitin (484 aa).

Residues 1-20 form the signal peptide; that stretch reads MIQVLLVTICLAVFPYQGNS. Residues 21–192 constitute a propeptide that is removed on maturation; the sequence is IILESGNVND…ASQLNLTPDE (172 aa). Gln-193 carries the pyrrolidone carboxylic acid modification. The Peptidase M12B domain maps to 194-392; the sequence is RFIELVIVAD…YTSRCLYNGP (199 aa). Glu-197 contacts Ca(2+). Asn-254 is a glycosylation site (N-linked (GlcNAc...) asparagine). Asp-281 lines the Ca(2+) pocket. 3 disulfide bridges follow: Cys-305-Cys-387, Cys-345-Cys-369, and Cys-347-Cys-352. Zn(2+) is bound by residues His-330, His-334, and His-340. Positions 387, 390, 402, 405, 409, 412, and 415 each coordinate Ca(2+). One can recognise a Disintegrin domain in the interval 400-484; the sequence is PPVCGNYYVE…GDCPRNPFRA (85 aa). 7 disulfides stabilise this stretch: Cys-403/Cys-422, Cys-414/Cys-432, Cys-416/Cys-427, Cys-426/Cys-449, Cys-440/Cys-446, Cys-445/Cys-470, and Cys-458/Cys-477. The short motif at 462–464 is the Cell attachment site element; it reads KGD.

Belongs to the venom metalloproteinase (M12B) family. P-II subfamily. P-IIb sub-subfamily. Requires Zn(2+) as cofactor. In terms of processing, the N-terminus is blocked. As to expression, expressed by the venom gland.

It is found in the secreted. Its function is as follows. Snake venom zinc metalloproteinase that inhibits ADP-induced platelet aggregation in human platelet-rich plasma (IC(50) is 175 nM) and cleaves alpha-(FGA) and subsequently the beta-chain (FGG) of bovine fibrinogen, leaving the gamma-chain unaffected. It is also able to inhibit proliferatin of ECV304 cells by inducing apoptosis of these cells. The protein is Zinc metalloproteinase-disintegrin stejnitin of Trimeresurus stejnegeri (Chinese green tree viper).